The sequence spans 152 residues: Arginine repressor (152 aa).

The protein belongs to the ArgR family.

Its subcellular location is the cytoplasm. It functions in the pathway amino-acid biosynthesis; L-arginine biosynthesis [regulation]. Functionally, regulates arginine biosynthesis genes. This is Arginine repressor from Thermotoga sp. (strain RQ2).